The primary structure comprises 83 residues: Small ribosomal subunit protein bS16 (83 aa).

It belongs to the bacterial ribosomal protein bS16 family.

In Pseudomonas fluorescens (strain Pf0-1), this protein is Small ribosomal subunit protein bS16.